A 207-amino-acid chain; its full sequence is Cytochrome c biogenesis ATP-binding export protein CcmA (207 aa).

The region spanning 2–204 is the ABC transporter domain; the sequence is LEVKNLTAIR…NPKLRKIRLG (203 aa). 34–41 provides a ligand contact to ATP; that stretch reads GRNGTGKT.

This sequence belongs to the ABC transporter superfamily. CcmA exporter (TC 3.A.1.107) family. As to quaternary structure, the complex is composed of two ATP-binding proteins (CcmA) and two transmembrane proteins (CcmB).

The protein localises to the cell inner membrane. It catalyses the reaction heme b(in) + ATP + H2O = heme b(out) + ADP + phosphate + H(+). Functionally, part of the ABC transporter complex CcmAB involved in the biogenesis of c-type cytochromes; once thought to export heme, this seems not to be the case, but its exact role is uncertain. Responsible for energy coupling to the transport system. The protein is Cytochrome c biogenesis ATP-binding export protein CcmA of Vibrio cholerae serotype O1 (strain ATCC 39315 / El Tor Inaba N16961).